The sequence spans 270 residues: tRNA pseudouridine synthase A (270 aa).

The active-site Nucleophile is the Asp-60. Positions 107–111 (FHARF) are RNA binding. Tyr-118 serves as a coordination point for substrate. An interaction with tRNA region spans residues 168–172 (QCQSR).

This sequence belongs to the tRNA pseudouridine synthase TruA family. In terms of assembly, homodimer.

It carries out the reaction uridine(38/39/40) in tRNA = pseudouridine(38/39/40) in tRNA. Functionally, formation of pseudouridine at positions 38, 39 and 40 in the anticodon stem and loop of transfer RNAs. In Escherichia coli (strain 55989 / EAEC), this protein is tRNA pseudouridine synthase A.